We begin with the raw amino-acid sequence, 372 residues long: Probable arabinan endo-1,5-alpha-L-arabinosidase B (372 aa).

The signal sequence occupies residues 1-16 (MTVLVALFCLVTWTLC). Over residues 23–34 (STQGTQQPQQPE) the composition is skewed to low complexity. The disordered stretch occupies residues 23–52 (STQGTQQPQQPEKTPHPHPQPEDAFPPTHA). Asp-59 functions as the Proton acceptor in the catalytic mechanism. N-linked (GlcNAc...) asparagine glycosylation is present at Asn-120. The active-site Proton donor is the Glu-252. N-linked (GlcNAc...) asparagine glycosylation occurs at Asn-363.

It belongs to the glycosyl hydrolase 43 family.

Its subcellular location is the secreted. The catalysed reaction is Endohydrolysis of (1-&gt;5)-alpha-arabinofuranosidic linkages in (1-&gt;5)-arabinans.. It participates in glycan metabolism; L-arabinan degradation. Its function is as follows. Endo-1,5-alpha-L-arabinanase involved in degradation of pectin. Its preferred substrate is linear 1,5-alpha-L-arabinan. This chain is Probable arabinan endo-1,5-alpha-L-arabinosidase B (abnB), found in Aspergillus fumigatus (strain ATCC MYA-4609 / CBS 101355 / FGSC A1100 / Af293) (Neosartorya fumigata).